A 446-amino-acid chain; its full sequence is ATP synthase subunit b-delta (446 aa).

Residues 1–168 (MSTFIGQLFG…PATADVDYPL (168 aa)) form an ATP synthase subunit b region. Residues 4-24 (FIGQLFGFAVIVYLVWRFIVP) traverse the membrane as a helical segment. The segment at 169–446 (LAKMRSASRR…LAAAEARLPD (278 aa)) is ATP synthase subunit delta.

In the N-terminal section; belongs to the ATPase B chain family. This sequence in the C-terminal section; belongs to the ATPase delta chain family. As to quaternary structure, F-type ATPases have 2 components, F(1) - the catalytic core - and F(0) - the membrane proton channel. F(1) has five subunits: alpha(3), beta(3), gamma(1), delta(1), epsilon(1). F(0) has three main subunits: a(1), b(2) and c(10-14). The alpha and beta chains form an alternating ring which encloses part of the gamma chain. F(1) is attached to F(0) by a central stalk formed by the gamma and epsilon chains, while a peripheral stalk is formed by the delta and b chains.

The protein resides in the cell membrane. In terms of biological role, f(1)F(0) ATP synthase produces ATP from ADP in the presence of a proton or sodium gradient. F-type ATPases consist of two structural domains, F(1) containing the extramembraneous catalytic core and F(0) containing the membrane proton channel, linked together by a central stalk and a peripheral stalk. During catalysis, ATP synthesis in the catalytic domain of F(1) is coupled via a rotary mechanism of the central stalk subunits to proton translocation. Its function is as follows. This fusion protein includes a component of the F(0) channel (subunit b) and of the F(1) subunit (subunit delta). Two copies of subunit b and one of delta together form the peripheral 'stator' stalk which links F(1) to F(0). The sequence is that of ATP synthase subunit b-delta (atpFH) from Mycobacterium bovis (strain ATCC BAA-935 / AF2122/97).